We begin with the raw amino-acid sequence, 1000 residues long: Peroxisomal ATPase PEX6 (1000 aa).

742 to 749 (GPPGTGKT) is an ATP binding site.

Belongs to the AAA ATPase family. As to quaternary structure, interacts with PEX1; forming the PEX1-PEX6 AAA ATPase complex, which is composed of a heterohexamer formed by a trimer of PEX1-PEX6 dimers.

The protein resides in the cytoplasm. It is found in the cytosol. Its subcellular location is the peroxisome membrane. It catalyses the reaction ATP + H2O = ADP + phosphate + H(+). Its function is as follows. Component of the PEX1-PEX6 AAA ATPase complex, a protein dislocase complex that mediates the ATP-dependent extraction of the PEX5 receptor from peroxisomal membranes, an essential step for PEX5 recycling. Specifically recognizes PEX5 monoubiquitinated at 'Cys-6', and pulls it out of the peroxisome lumen through the PEX2-PEX10-PEX12 retrotranslocation channel. Extraction by the PEX1-PEX6 AAA ATPase complex is accompanied by unfolding of the TPR repeats and release of bound cargo from PEX5. This is Peroxisomal ATPase PEX6 (PEX6) from Kluyveromyces lactis (strain ATCC 8585 / CBS 2359 / DSM 70799 / NBRC 1267 / NRRL Y-1140 / WM37) (Yeast).